A 251-amino-acid chain; its full sequence is Adenosylcobinamide-GDP ribazoletransferase (251 aa).

7 consecutive transmembrane segments (helical) span residues 36–56 (LYPFIGLIIGALWYLSFFVLS), 60–80 (VPIMLMAALILTVPYILTGFL), 110–130 (VGAFSVISVVLLLLVEFAGMF), 141–161 (ILIFIPIASRVINGYFIVSQE), 181–201 (EIILLGIYVLVALITFFTLGI), 202–222 (NYLIAILAMGLISFILLLKVK), and 231–251 (DVAGYILVLMEFTGILLLGII).

The protein belongs to the CobS family. Mg(2+) serves as cofactor.

Its subcellular location is the cell membrane. The catalysed reaction is alpha-ribazole + adenosylcob(III)inamide-GDP = adenosylcob(III)alamin + GMP + H(+). It carries out the reaction alpha-ribazole 5'-phosphate + adenosylcob(III)inamide-GDP = adenosylcob(III)alamin 5'-phosphate + GMP + H(+). It participates in cofactor biosynthesis; adenosylcobalamin biosynthesis; adenosylcobalamin from cob(II)yrinate a,c-diamide: step 7/7. Functionally, joins adenosylcobinamide-GDP and alpha-ribazole to generate adenosylcobalamin (Ado-cobalamin). Also synthesizes adenosylcobalamin 5'-phosphate from adenosylcobinamide-GDP and alpha-ribazole 5'-phosphate. The polypeptide is Adenosylcobinamide-GDP ribazoletransferase (Clostridium perfringens (strain ATCC 13124 / DSM 756 / JCM 1290 / NCIMB 6125 / NCTC 8237 / Type A)).